The following is a 362-amino-acid chain: 3-dehydroquinate synthase (362 aa).

Residues 71–76 (DGEQYK), 105–109 (GVIGD), 129–130 (TT), Lys142, Lys151, and 169–172 (CLKT) each bind NAD(+). Glu184, His247, and His264 together coordinate Zn(2+).

It belongs to the sugar phosphate cyclases superfamily. Dehydroquinate synthase family. Requires Co(2+) as cofactor. The cofactor is Zn(2+). NAD(+) serves as cofactor.

It localises to the cytoplasm. The enzyme catalyses 7-phospho-2-dehydro-3-deoxy-D-arabino-heptonate = 3-dehydroquinate + phosphate. The protein operates within metabolic intermediate biosynthesis; chorismate biosynthesis; chorismate from D-erythrose 4-phosphate and phosphoenolpyruvate: step 2/7. Functionally, catalyzes the conversion of 3-deoxy-D-arabino-heptulosonate 7-phosphate (DAHP) to dehydroquinate (DHQ). The protein is 3-dehydroquinate synthase of Salmonella agona (strain SL483).